Here is a 361-residue protein sequence, read N- to C-terminus: Single-stranded DNA-binding protein 3 (361 aa).

Position 1 is an N-acetylmethionine (Met-1). The LisH domain occupies 16-48 (AREKLALYVYEYLLHVGAQKSAQTFLSEIRWEK). An asymmetric dimethylarginine mark is found at Arg-128, Arg-134, and Arg-138. 2 disordered regions span residues 140–166 (GNQP…QQGH) and 184–361 (PMGP…TMSV). The span at 223-241 (PNSANSIPYSSSSPGTYVG) shows a compositional bias: low complexity. The span at 245-255 (GGGPPGTPIMP) shows a compositional bias: pro residues. A compositionally biased stretch (polar residues) spans 258-269 (ADSTNSSDNIYT). Residues 288–298 (GSDGPMGGMGG) are compositionally biased toward gly residues. The segment covering 319-330 (NSPNNISGISNP) has biased composition (low complexity). Phosphoserine is present on residues Ser-320, Ser-325, and Ser-328. Phosphothreonine is present on Thr-333. A compositionally biased stretch (polar residues) spans 346–361 (HSFQNDNYSPSMTMSV). Ser-354 and Ser-360 each carry phosphoserine.

The protein localises to the nucleus. Its function is as follows. May be involved in transcription regulation of the alpha 2(I) collagen gene where it binds to the single-stranded polypyrimidine sequences in the promoter region. The chain is Single-stranded DNA-binding protein 3 (Ssbp3) from Rattus norvegicus (Rat).